Here is a 1430-residue protein sequence, read N- to C-terminus: Gag-Pol polyprotein (1430 aa).

A lipid anchor (N-myristoyl glycine; by host) is attached at glycine 2. An interaction with Gp41 region spans residues 7-31 (VLSGGKLDAWEKIRLRPGGKKKYKL). The interaction with host CALM1 stretch occupies residues 8–43 (LSGGKLDAWEKIRLRPGGKKKYKLKHLVWASRELER). The interval 12–19 (KLDAWEKI) is interaction with host AP3D1. Residues 14-33 (DAWEKIRLRPGGKKKYKLKH) form an interaction with membrane phosphatidylinositol 4,5-bisphosphate and RNA region. Positions 16 to 22 (WEKIRLR) match the Nuclear export signal motif. Residues 26 to 32 (KKKYKLK) carry the Nuclear localization signal motif. The interval 73-77 (EEIKS) is interaction with membrane phosphatidylinositol 4,5-bisphosphate. Tyrosine 128 is subject to Phosphotyrosine; by host. Residues 185–223 (NTVGGHQAAMQMLKDTINDEAAEWDRLHPVHAGPIPPGQ) are interaction with human PPIA/CYPA and NUP153. Positions 273–359 (YSPVSILDIR…GGPSHKARIL (87 aa)) are dimerization/Multimerization of capsid protein p24. 2 CCHC-type zinc fingers span residues 385 to 402 (VKCF…NCRA) and 406 to 423 (KGCW…DCTE). Residues 439 to 480 (EAREFSSEQTRANSPTSRELRVRGGDNPLSEAGDQRQGTEPS) form a disordered region. The span at 445 to 455 (SEQTRANSPTS) shows a compositional bias: polar residues. Residues 484–488 (PQITL) are dimerization of protease. The 70-residue stretch at 503 to 572 (REALLDTGAD…TPVNIIGRNL (70 aa)) folds into the Peptidase A2 domain. The For protease activity; shared with dimeric partner role is filled by aspartate 508. 2 dimerization of protease regions span residues 532 to 538 (GIGGFIK) and 571 to 583 (NLLT…LNFP). Residues 626-816 (EGKISKIGPE…PPFLWMGYEL (191 aa)) form the Reverse transcriptase domain. Mg(2+) is bound by residues aspartate 692, aspartate 767, and aspartate 768. Residues 809–817 (FLWMGYELH) form an RT 'primer grip' region. Residues 980–996 (WETWWTEYWQATWIPEW) carry the Tryptophan repeat motif motif. The RNase H type-1 domain maps to 1016 to 1139 (IVGAETFYVD…VDKLVSAGIR (124 aa)). Residues aspartate 1025, glutamate 1060, aspartate 1080, and aspartate 1131 each contribute to the Mg(2+) site. The segment at 1145-1186 (DGIDKAQEEHEKYHNNWRAMASDFNLPPIVAKEIVASCDKCQ) adopts an Integrase-type zinc-finger fold. 4 residues coordinate Zn(2+): histidine 1154, histidine 1158, cysteine 1182, and cysteine 1185. Residues 1196 to 1346 (VDCSPGIWQL…SAGERIVDII (151 aa)) enclose the Integrase catalytic domain. Mg(2+) is bound by residues aspartate 1206, aspartate 1258, and glutamate 1294. The segment at residues 1365 to 1412 (FRVYYRDSREPIWKGPAKLLWKGEGAVVIQDNSEIKVVPRRKAKIIRD) is a DNA-binding region (integrase-type).

In terms of assembly, homotrimer; further assembles as hexamers of trimers. Interacts with gp41 (via C-terminus). Interacts with host CALM1; this interaction induces a conformational change in the Matrix protein, triggering exposure of the myristate group. Interacts with host AP3D1; this interaction allows the polyprotein trafficking to multivesicular bodies during virus assembly. Part of the pre-integration complex (PIC) which is composed of viral genome, matrix protein, Vpr and integrase. As to quaternary structure, homodimer; the homodimer further multimerizes as homohexamers or homopentamers. Interacts with human PPIA/CYPA; This interaction stabilizes the capsid. Interacts with human NUP153. Interacts with host PDZD8; this interaction stabilizes the capsid. Interacts with monkey TRIM5; this interaction destabilizes the capsid. Homodimer, whose active site consists of two apposed aspartic acid residues. In terms of assembly, heterodimer of p66 RT and p51 RT (RT p66/p51). Heterodimerization of RT is essential for DNA polymerase activity. The overall folding of the subdomains is similar in p66 RT and p51 RT but the spatial arrangements of the subdomains are dramatically different. As to quaternary structure, homotetramer; may further associate as a homohexadecamer. Part of the pre-integration complex (PIC) which is composed of viral genome, matrix protein, Vpr and integrase. Interacts with human SMARCB1/INI1 and human PSIP1/LEDGF isoform 1. Interacts with human KPNA3; this interaction might play a role in nuclear import of the pre-integration complex. Interacts with human NUP153; this interaction might play a role in nuclear import of the pre-integration complex. The cofactor is Mg(2+). Post-translationally, specific enzymatic cleavages by the viral protease yield mature proteins. The protease is released by autocatalytic cleavage. The polyprotein is cleaved during and after budding, this process is termed maturation. Proteolytic cleavage of p66 RT removes the RNase H domain to yield the p51 RT subunit. Nucleocapsid protein p7 might be further cleaved after virus entry. In terms of processing, tyrosine phosphorylated presumably in the virion by a host kinase. Phosphorylation is apparently not a major regulator of membrane association. Phosphorylated possibly by host MAPK1; this phosphorylation is necessary for Pin1-mediated virion uncoating. Post-translationally, methylated by host PRMT6, impairing its function by reducing RNA annealing and the initiation of reverse transcription.

It is found in the host cell membrane. The protein resides in the host endosome. It localises to the host multivesicular body. Its subcellular location is the virion membrane. The protein localises to the host nucleus. It is found in the host cytoplasm. The protein resides in the virion. It catalyses the reaction Specific for a P1 residue that is hydrophobic, and P1' variable, but often Pro.. The catalysed reaction is Endohydrolysis of RNA in RNA/DNA hybrids. Three different cleavage modes: 1. sequence-specific internal cleavage of RNA. Human immunodeficiency virus type 1 and Moloney murine leukemia virus enzymes prefer to cleave the RNA strand one nucleotide away from the RNA-DNA junction. 2. RNA 5'-end directed cleavage 13-19 nucleotides from the RNA end. 3. DNA 3'-end directed cleavage 15-20 nucleotides away from the primer terminus.. The enzyme catalyses 3'-end directed exonucleolytic cleavage of viral RNA-DNA hybrid.. It carries out the reaction DNA(n) + a 2'-deoxyribonucleoside 5'-triphosphate = DNA(n+1) + diphosphate. With respect to regulation, protease: The viral protease is inhibited by many synthetic protease inhibitors (PIs), such as amprenavir, atazanavir, indinavir, loprinavir, nelfinavir, ritonavir and saquinavir. Use of protease inhibitors in tritherapy regimens permit more ambitious therapeutic strategies. Reverse transcriptase/ribonuclease H: RT can be inhibited either by nucleoside RT inhibitors (NRTIs) or by non nucleoside RT inhibitors (NNRTIs). NRTIs act as chain terminators, whereas NNRTIs inhibit DNA polymerization by binding a small hydrophobic pocket near the RT active site and inducing an allosteric change in this region. Classical NRTIs are abacavir, adefovir (PMEA), didanosine (ddI), lamivudine (3TC), stavudine (d4T), tenofovir (PMPA), zalcitabine (ddC), and zidovudine (AZT). Classical NNRTIs are atevirdine (BHAP U-87201E), delavirdine, efavirenz (DMP-266), emivirine (I-EBU), and nevirapine (BI-RG-587). The tritherapies used as a basic effective treatment of AIDS associate two NRTIs and one NNRTI. Its function is as follows. Mediates, with Gag polyprotein, the essential events in virion assembly, including binding the plasma membrane, making the protein-protein interactions necessary to create spherical particles, recruiting the viral Env proteins, and packaging the genomic RNA via direct interactions with the RNA packaging sequence (Psi). Gag-Pol polyprotein may regulate its own translation, by the binding genomic RNA in the 5'-UTR. At low concentration, the polyprotein would promote translation, whereas at high concentration, the polyprotein would encapsidate genomic RNA and then shut off translation. Targets the polyprotein to the plasma membrane via a multipartite membrane-binding signal, that includes its myristoylated N-terminus. Matrix protein is part of the pre-integration complex. Implicated in the release from host cell mediated by Vpu. Binds to RNA. In terms of biological role, forms the conical core that encapsulates the genomic RNA-nucleocapsid complex in the virion. Most core are conical, with only 7% tubular. The core is constituted by capsid protein hexamer subunits. The core is disassembled soon after virion entry. Host restriction factors such as TRIM5-alpha or TRIMCyp bind retroviral capsids and cause premature capsid disassembly, leading to blocks in reverse transcription. Capsid restriction by TRIM5 is one of the factors which restricts HIV-1 to the human species. Host PIN1 apparently facilitates the virion uncoating. On the other hand, interactions with PDZD8 or CYPA stabilize the capsid. Functionally, encapsulates and protects viral dimeric unspliced genomic RNA (gRNA). Binds these RNAs through its zinc fingers. Acts as a nucleic acid chaperone which is involved in rearangement of nucleic acid secondary structure during gRNA retrotranscription. Also facilitates template switch leading to recombination. As part of the polyprotein, participates in gRNA dimerization, packaging, tRNA incorporation and virion assembly. Its function is as follows. Aspartyl protease that mediates proteolytic cleavages of Gag and Gag-Pol polyproteins during or shortly after the release of the virion from the plasma membrane. Cleavages take place as an ordered, step-wise cascade to yield mature proteins. This process is called maturation. Displays maximal activity during the budding process just prior to particle release from the cell. Also cleaves Nef and Vif, probably concomitantly with viral structural proteins on maturation of virus particles. Hydrolyzes host EIF4GI and PABP1 in order to shut off the capped cellular mRNA translation. The resulting inhibition of cellular protein synthesis serves to ensure maximal viral gene expression and to evade host immune response. Also mediates cleavage of host YTHDF3. Mediates cleavage of host CARD8, thereby activating the CARD8 inflammasome, leading to the clearance of latent HIV-1 in patient CD4(+) T-cells after viral reactivation; in contrast, HIV-1 can evade CARD8-sensing when its protease remains inactive in infected cells prior to viral budding. Multifunctional enzyme that converts the viral RNA genome into dsDNA in the cytoplasm, shortly after virus entry into the cell. This enzyme displays a DNA polymerase activity that can copy either DNA or RNA templates, and a ribonuclease H (RNase H) activity that cleaves the RNA strand of RNA-DNA heteroduplexes in a partially processive 3' to 5' endonucleasic mode. Conversion of viral genomic RNA into dsDNA requires many steps. A tRNA(3)-Lys binds to the primer-binding site (PBS) situated at the 5'-end of the viral RNA. RT uses the 3' end of the tRNA primer to perform a short round of RNA-dependent minus-strand DNA synthesis. The reading proceeds through the U5 region and ends after the repeated (R) region which is present at both ends of viral RNA. The portion of the RNA-DNA heteroduplex is digested by the RNase H, resulting in a ssDNA product attached to the tRNA primer. This ssDNA/tRNA hybridizes with the identical R region situated at the 3' end of viral RNA. This template exchange, known as minus-strand DNA strong stop transfer, can be either intra- or intermolecular. RT uses the 3' end of this newly synthesized short ssDNA to perform the RNA-dependent minus-strand DNA synthesis of the whole template. RNase H digests the RNA template except for two polypurine tracts (PPTs) situated at the 5'-end and near the center of the genome. It is not clear if both polymerase and RNase H activities are simultaneous. RNase H probably can proceed both in a polymerase-dependent (RNA cut into small fragments by the same RT performing DNA synthesis) and a polymerase-independent mode (cleavage of remaining RNA fragments by free RTs). Secondly, RT performs DNA-directed plus-strand DNA synthesis using the PPTs that have not been removed by RNase H as primers. PPTs and tRNA primers are then removed by RNase H. The 3' and 5' ssDNA PBS regions hybridize to form a circular dsDNA intermediate. Strand displacement synthesis by RT to the PBS and PPT ends produces a blunt ended, linear dsDNA copy of the viral genome that includes long terminal repeats (LTRs) at both ends. In terms of biological role, catalyzes viral DNA integration into the host chromosome, by performing a series of DNA cutting and joining reactions. This enzyme activity takes place after virion entry into a cell and reverse transcription of the RNA genome in dsDNA. The first step in the integration process is 3' processing. This step requires a complex comprising the viral genome, matrix protein, Vpr and integrase. This complex is called the pre-integration complex (PIC). The integrase protein removes 2 nucleotides from each 3' end of the viral DNA, leaving recessed CA OH's at the 3' ends. In the second step, the PIC enters cell nucleus. This process is mediated through integrase and Vpr proteins, and allows the virus to infect a non dividing cell. This ability to enter the nucleus is specific of lentiviruses, other retroviruses cannot and rely on cell division to access cell chromosomes. In the third step, termed strand transfer, the integrase protein joins the previously processed 3' ends to the 5' ends of strands of target cellular DNA at the site of integration. The 5'-ends are produced by integrase-catalyzed staggered cuts, 5 bp apart. A Y-shaped, gapped, recombination intermediate results, with the 5'-ends of the viral DNA strands and the 3' ends of target DNA strands remaining unjoined, flanking a gap of 5 bp. The last step is viral DNA integration into host chromosome. This involves host DNA repair synthesis in which the 5 bp gaps between the unjoined strands are filled in and then ligated. Since this process occurs at both cuts flanking the HIV genome, a 5 bp duplication of host DNA is produced at the ends of HIV-1 integration. Alternatively, Integrase may catalyze the excision of viral DNA just after strand transfer, this is termed disintegration. The polypeptide is Gag-Pol polyprotein (gag-pol) (Homo sapiens (Human)).